The primary structure comprises 576 residues: Tudor and KH domain-containing protein homolog (576 aa).

A disordered region spans residues 40 to 60 (EEADSGGQRPASGIRGQTEEQ). KH domains lie at 65–127 (EVCL…RALL) and 136–199 (VVKV…RKML). The span at 209–224 (LVRSMEEVEQRREPRR) shows a compositional bias: basic and acidic residues. Positions 209-253 (LVRSMEEVEQRREPRRSPTNSIASSMYSSQTSLSSHTQPRDKLMA) are disordered. Residues 232 to 243 (SSMYSSQTSLSS) are compositionally biased toward low complexity. The 66-residue stretch at 310–375 (APYVGQIVAA…CELRTDFLTL (66 aa)) folds into the Tudor domain. A disordered region spans residues 556 to 576 (ATDLENGNNNNASTTNGASAH). A compositionally biased stretch (low complexity) spans 561–576 (NGNNNNASTTNGASAH).

Belongs to the Tdrkh family. In terms of assembly, interacts (via C-terminus) with AGO3 (via the N-terminal region when symmetrically methylated on arginine residues); this interaction is RNA-independent and may be required for AGO3 localization to the nuage. Interacts (via Tudor domain) with piwi (via N-terminus). Interacts with tral and me31B. Ovaries (at protein level). Expressed in the ovary and testis.

It is found in the cytoplasm. Its subcellular location is the nucleus. The protein localises to the cytoplasmic ribonucleoprotein granule. In terms of biological role, involved in the piwi-interacting RNA (piRNA) metabolic process, which mediates the repression of transposable elements during meiosis by forming complexes composed of piRNAs and Piwi proteins, and governs the methylation and subsequent repression of transposons which is essential for germline integrity. Likely to act by recruiting Piwi proteins such as AGO3 and piwi to the piRNA biogenesis machinery in the nuage. Required for the final steps of primary piRNA biogenesis by participating in the 3' end-trimming of piwi-bound intermediates into mature piRNAs. The chain is Tudor and KH domain-containing protein homolog from Drosophila melanogaster (Fruit fly).